We begin with the raw amino-acid sequence, 172 residues long: MERAIQGNDAREQAYGERWNGGSGSSTSPFKLPDESPSWTEWRLHNDETISNQDNPLGFKESWGFGKVVFKRYLRYERTETSLHRVLGSWTGDSVNYAASRFLGFDQIGCTYSIRFRGVSVTISGGSRTLQHLSEMAIRSKQELLQLTPVEVESDVSRGCPEGIETFKEESE.

The segment covering 1–15 (MERAIQGNDAREQAY) has biased composition (basic and acidic residues). Residues 1–37 (MERAIQGNDAREQAYGERWNGGSGSSTSPFKLPDESP) form a disordered region.

Belongs to the tombusvirus protein p19 family. In terms of assembly, homodimer.

In terms of biological role, viral suppressor of RNA silencing which binds specifically to silencing RNAs (siRNAs). Acts as a molecular caliper to specifically select siRNAs based on the length of the duplex region of the RNA. This Capsicum annuum (Capsicum pepper) protein is RNA silencing suppressor p19.